The chain runs to 443 residues: Putative metabolite transport protein YaaU (443 aa).

Over 1–18 (MQPSRNFDDLKFSSIHRR) the chain is Cytoplasmic. The helical transmembrane segment at 19-39 (ILLWGSGGPFLDGYVLVMIGV) threads the bilayer. Residues 40–53 (ALEQLTPALKLDAD) lie on the Periplasmic side of the membrane. The chain crosses the membrane as a helical span at residues 54–74 (WIGLLGAGTLAGLFVGTSLFG). Over 75–84 (YISDKVGRRK) the chain is Cytoplasmic. The helical transmembrane segment at 85–105 (MFLIDIIAIGVISVATMFVSS) threads the bilayer. Over 106–113 (PVELLVMR) the chain is Periplasmic. Residues 114–134 (VLIGIVIGADYPIATSMITEF) form a helical membrane-spanning segment. The Cytoplasmic segment spans residues 135–145 (SSTRQRAFSIS). A helical transmembrane segment spans residues 146-166 (FIAAMWYVGATCADLVGYWLY). Over 167-173 (DVEGGWR) the chain is Periplasmic. Residues 174-194 (WMLGSAAIPCLLILIGRFELP) traverse the membrane as a helical segment. Topologically, residues 195 to 241 (ESPRWLLRKGRVKECEEMMIKLFGEPVAFDEEQPQQTRFRDLFNRRH) are cytoplasmic. Residues 242–262 (FPFVLFVAAIWTCQVIPMFAI) traverse the membrane as a helical segment. The Periplasmic portion of the chain corresponds to 263-282 (YTFGPQIVGLLGLGVGKNAA). Residues 283-303 (LGNVVISLFFMLGCIPPMLWL) form a helical membrane-spanning segment. The Cytoplasmic portion of the chain corresponds to 304 to 309 (NTAGRR). Residues 310–329 (PLLIGSFAMMTLALAVLGLI) traverse the membrane as a helical segment. Topologically, residues 330–334 (PDMGI) are periplasmic. Residues 335–357 (WLVVMAFAVYAFFSGGPGNLQWL) traverse the membrane as a helical segment. Residues 358–373 (YPNELFPTDIRASAVG) lie on the Cytoplasmic side of the membrane. A helical transmembrane segment spans residues 374–394 (VIMSLSRIGTIVSTWALPIFI). The Periplasmic portion of the chain corresponds to 395–401 (NNYGISN). The helical transmembrane segment at 402–422 (TMLMGAGISLFGLLISVAFAP) threads the bilayer. Over 423–443 (ETRGMSLAQTSNMTIRGQRMG) the chain is Cytoplasmic.

This sequence belongs to the major facilitator superfamily. Sugar transporter (TC 2.A.1.1) family.

It localises to the cell inner membrane. This chain is Putative metabolite transport protein YaaU (yaaU), found in Escherichia coli (strain K12).